We begin with the raw amino-acid sequence, 301 residues long: F-actin-capping protein subunit beta (301 aa).

Ser31 is subject to Phosphoserine. The residue at position 264 (Lys264) is an N6-acetyllysine.

The protein belongs to the F-actin-capping protein beta subunit family. Component of the F-actin capping complex, composed of a heterodimer of an alpha and a beta subunit. Subunit of dynactin, a multiprotein complex part of a tripartite complex with dynein and a adapter, such as BICDL1, BICD2 or HOOK3. The dynactin complex is built around ACTR1A/ACTB filament and consists of an actin-related filament composed of a shoulder domain, a pointed end and a barbed end. Its length is defined by its flexible shoulder domain. The soulder is composed of 2 DCTN1 subunits, 4 DCTN2 and 2 DCTN3. The 4 DCNT2 (via N-terminus) bind the ACTR1A filament and act as molecular rulers to determine the length. The pointed end is important for binding dynein-dynactin cargo adapters. Consists of 4 subunits: ACTR10, DCNT4, DCTN5 and DCTN6. The barbed end is composed of a CAPZA1:CAPZB heterodimers, which binds ACTR1A/ACTB filament and dynactin and stabilizes dynactin. Interacts with ARHGAP17. Interaction with RCSD1/CAPZIP. Component of the WASH complex, composed of F-actin-capping protein subunit alpha (CAPZA1, CAPZA2 or CAPZA3), F-actin-capping protein subunit beta (CAPZB), WASH (WASHC1, WASH2P, WASH3P, WASH4P, WASH5P or WASH6P), WASHC2 (WASHC2A or WASHC2C), WASHC3, WASHC4 and WASHC5. Interacts with ACTG1. Directly interacts with CRACD; this interaction decreases binding to actin. In terms of tissue distribution, the isoform beta-3 is predominantly expressed in the testis. It is only detected in total sperm, sperm heads and the calyx fraction, but not in sperm tails or any supernatant fraction. Weaker expression also found in brain.

The protein localises to the cytoplasm. The protein resides in the cytoskeleton. Its subcellular location is the perinuclear theca. It localises to the calyx. In terms of biological role, F-actin-capping proteins bind in a Ca(2+)-independent manner to the fast growing ends of actin filaments (barbed end) thereby blocking the exchange of subunits at these ends. Unlike other capping proteins (such as gelsolin and severin), these proteins do not sever actin filaments. Plays a role in the regulation of cell morphology and cytoskeletal organization. Forms, with CAPZB, the barbed end of the fast growing ends of actin filaments in the dynactin complex and stabilizes dynactin structure. The dynactin multiprotein complex activates the molecular motor dynein for ultra-processive transport along microtubules. This is F-actin-capping protein subunit beta (CAPZB) from Bos taurus (Bovine).